The sequence spans 227 residues: NADH-quinone oxidoreductase subunit C (227 aa).

Belongs to the complex I 30 kDa subunit family. As to quaternary structure, NDH-1 is composed of 14 different subunits. Subunits NuoB, C, D, E, F, and G constitute the peripheral sector of the complex.

The protein localises to the cell inner membrane. It carries out the reaction a quinone + NADH + 5 H(+)(in) = a quinol + NAD(+) + 4 H(+)(out). Functionally, NDH-1 shuttles electrons from NADH, via FMN and iron-sulfur (Fe-S) centers, to quinones in the respiratory chain. The immediate electron acceptor for the enzyme in this species is believed to be ubiquinone. Couples the redox reaction to proton translocation (for every two electrons transferred, four hydrogen ions are translocated across the cytoplasmic membrane), and thus conserves the redox energy in a proton gradient. The chain is NADH-quinone oxidoreductase subunit C from Legionella pneumophila subsp. pneumophila (strain Philadelphia 1 / ATCC 33152 / DSM 7513).